A 276-amino-acid chain; its full sequence is Putative pyridoxine kinase (276 aa).

Residue N139 coordinates ATP. E142 is a binding site for Mg(2+). ATP contacts are provided by residues 176 to 180, D188, G213, and K238; that span reads KGGKA.

This sequence belongs to the ThiD family.

The catalysed reaction is pyridoxal + ATP = pyridoxal 5'-phosphate + ADP + H(+). In terms of biological role, phosphorylates B6 vitamers; functions in a salvage pathway. Uses pyridoxal, pyridoxine, and pyridoxamine as substrates. This chain is Putative pyridoxine kinase (pdxK), found in Staphylococcus aureus (strain COL).